The sequence spans 250 residues: Endonuclease NucS 2 (250 aa).

This sequence belongs to the NucS endonuclease family.

It localises to the cytoplasm. In terms of biological role, cleaves both 3' and 5' ssDNA extremities of branched DNA structures. The sequence is that of Endonuclease NucS 2 from Halobacterium salinarum (strain ATCC 700922 / JCM 11081 / NRC-1) (Halobacterium halobium).